We begin with the raw amino-acid sequence, 692 residues long: DNA ligase (692 aa).

NAD(+) is bound by residues 35-39 (DLVYD), 88-89 (SL), and Glu117. Lys119 (N6-AMP-lysine intermediate) is an active-site residue. NAD(+)-binding residues include Arg140, Glu176, Lys301, and Lys325. Zn(2+) contacts are provided by Cys416, Cys419, Cys434, and Cys439. In terms of domain architecture, BRCT spans 611–692 (LTNQSNSWAS…FDLIKNSKKT (82 aa)).

This sequence belongs to the NAD-dependent DNA ligase family. LigA subfamily. Mg(2+) serves as cofactor. It depends on Mn(2+) as a cofactor.

The enzyme catalyses NAD(+) + (deoxyribonucleotide)n-3'-hydroxyl + 5'-phospho-(deoxyribonucleotide)m = (deoxyribonucleotide)n+m + AMP + beta-nicotinamide D-nucleotide.. Functionally, DNA ligase that catalyzes the formation of phosphodiester linkages between 5'-phosphoryl and 3'-hydroxyl groups in double-stranded DNA using NAD as a coenzyme and as the energy source for the reaction. It is essential for DNA replication and repair of damaged DNA. This Mesomycoplasma hyopneumoniae (strain 7448) (Mycoplasma hyopneumoniae) protein is DNA ligase.